We begin with the raw amino-acid sequence, 245 residues long: Triosephosphate isomerase (245 aa).

9 to 11 (NWK) contacts substrate. Histidine 92 serves as the catalytic Electrophile. Residue glutamate 164 is the Proton acceptor of the active site. Substrate is bound by residues glycine 170, serine 209, and 230 to 231 (GG).

The protein belongs to the triosephosphate isomerase family. Homodimer.

The protein localises to the cytoplasm. It catalyses the reaction D-glyceraldehyde 3-phosphate = dihydroxyacetone phosphate. The protein operates within carbohydrate biosynthesis; gluconeogenesis. Its pathway is carbohydrate degradation; glycolysis; D-glyceraldehyde 3-phosphate from glycerone phosphate: step 1/1. Its function is as follows. Involved in the gluconeogenesis. Catalyzes stereospecifically the conversion of dihydroxyacetone phosphate (DHAP) to D-glyceraldehyde-3-phosphate (G3P). The chain is Triosephosphate isomerase from Cupriavidus necator (strain ATCC 17699 / DSM 428 / KCTC 22496 / NCIMB 10442 / H16 / Stanier 337) (Ralstonia eutropha).